A 131-amino-acid polypeptide reads, in one-letter code: Small ribosomal subunit protein uS8 (131 aa).

It belongs to the universal ribosomal protein uS8 family. In terms of assembly, part of the 30S ribosomal subunit. Contacts proteins S5 and S12.

Functionally, one of the primary rRNA binding proteins, it binds directly to 16S rRNA central domain where it helps coordinate assembly of the platform of the 30S subunit. The chain is Small ribosomal subunit protein uS8 from Bordetella avium (strain 197N).